The following is a 371-amino-acid chain: Gustatory receptor-like 65a (371 aa).

Residues 1-13 (MREVNLLNRFTRQ) lie on the Cytoplasmic side of the membrane. Residues 14-34 (FLFLIVLVTQICGVATFVYNS) form a helical membrane-spanning segment. Residues 35–42 (KAQCFRQS) lie on the Extracellular side of the membrane. A helical transmembrane segment spans residues 43–63 (GFLRFYSSLVLIFLALFLIVT). The Cytoplasmic segment spans residues 64-72 (TSKMFHNLQ). A helical membrane pass occupies residues 73 to 93 (AVWPYVVGSVIILVVRIHGLL). At 94-126 (ESAEIVELLNQMLRIMRQVNLMARHPNLFRLKH) the chain is on the extracellular side. Residues 127–147 (LLLLLLALQNLLRSLNTIVGI) form a helical membrane-spanning segment. Residues 148 to 161 (SNHSAEAYDSFLNS) lie on the Cytoplasmic side of the membrane. The helical transmembrane segment at 162–182 (VILLIILAVLLSFLLQITINI) threads the bilayer. Residues 183 to 251 (CLFVVLIATY…FHITVRIIRH (69 aa)) lie on the Extracellular side of the membrane. The chain crosses the membrane as a helical span at residues 252–272 (FRFHWLCAIIYGLLPFFSLTA). At 273 to 277 (KDQNG) the chain is on the cytoplasmic side. Residues 278–298 (FNFLIISALNIIFQWTIFAIL) traverse the membrane as a helical segment. Topologically, residues 299–371 (SRESRITRSL…FVNRLEYLHI (73 aa)) are extracellular.

The protein localises to the cell membrane. This chain is Gustatory receptor-like 65a, found in Drosophila melanogaster (Fruit fly).